The primary structure comprises 1210 residues: MASQLQVFSPPSVSSSAFCSAKKLKIEPSGWDVSGQSSNDKYYTHSKTLPATQGQASSSHQVANFNLPAYDQGLLLPAPAVEHIVVTAADSSGSAATATFQSSQTLTHRSNVSLLEPYQKCGLKRKSEEVESNGSVQIIEEHPPLMLQNRTVVGAAATTTTVTTKSSSSSGEGDYQLVQHEILCSMTNSYEVLEFLGRGTFGQVAKCWKRSTKEIVAIKILKNHPSYARQGQIEVSILSRLSSENADEYNFVRSYECFQHKNHTCLVFEMLEQNLYDFLKQNKFSPLPLKYIRPILQQVATALMKLKSLGLIHADLKPENIMLVDPVRQPYRVKVIDFGSASHVSKAVCSTYLQSRYYRAPEIILGLPFCEAIDMWSLGCVIAELFLGWPLYPGASEYDQIRYISQTQGLPAEYLLSAGTKTTRFFNRDPNLGYPLWRLKTPEEHELETGIKSKEARKYIFNCLDDMAQVNMSTDLEGTDMLAEKADRREYIDLLKKMLTIDADKRITPLKTLNHQFVTMSHLLDFPHSSHVKSCFQNMEICKRRVHMYDTVSQIKSPFTTHVAPNTSTNLTMSFSNQLNTVHNQASVLASSSTAAAATLSLANSDVSLLNYQSALYPSSAAPVPGVAQQGVSLQPGTTQICTQTDPFQQTFIVCPPAFQTGLQATTKHSGFPVRMDNAVPIVPQAPAAQPLQIQSGVLTQGSCTPLMVATLHPQVATITPQYAVPFTLSCAAGRPALVEQTAAVLQAWPGGTQQILLPSAWQQLPGVALHNSVQPAAVIPEAMGSSQQLADWRNAHSHGNQYSTIMQQPSLLTNHVTLATAQPLNVGVAHVVRQQQSSSLPSKKNKQSAPVSSKSSLEVLPSQVYSLVGSSPLRTTSSYNSLVPVQDQHQPIIIPDTPSPPVSVITIRSDTDEEEDNKYKPNSSSLKARSNVISYVTVNDSPDSDSSLSSPHPTDTLSALRGNSGTLLEGPGRPAADGIGTRTIIVPPLKTQLGDCTVATQASGLLSSKTKPVASVSGQSSGCCITPTGYRAQRGGASAVQPLNLSQNQQSSSASTSQERSSNPAPRRQQAFVAPLSQAPYAFQHGSPLHSTGHPHLAPAPAHLPSQPHLYTYAAPTSAAALGSTSSIAHLFSPQGSSRHAAAYTTHPSTLVHQVPVSVGPSLLTSASVAPAQYQHQFATQSYIGSSRGSTIYTGYPLSPTKISQYSYL.

Lysine 25 participates in a covalent cross-link: Glycyl lysine isopeptide (Lys-Gly) (interchain with G-Cter in SUMO); alternate. Residue lysine 25 forms a Glycyl lysine isopeptide (Lys-Gly) (interchain with G-Cter in SUMO2); alternate linkage. Glycyl lysine isopeptide (Lys-Gly) (interchain with G-Cter in SUMO2) cross-links involve residues lysine 120 and lysine 124. Residues 190–518 enclose the Protein kinase domain; sequence YEVLEFLGRG…PLKTLNHQFV (329 aa). ATP contacts are provided by residues 196 to 204 and lysine 219; that span reads LGRGTFGQV. The active-site Proton acceptor is the aspartate 315. Residues 835 to 856 form a disordered region; sequence QQQSSSLPSKKNKQSAPVSSKS. Positions 844-847 match the Nuclear localization signal 1 (NLS1) motif; the sequence is KKNK. Serine 872 is subject to Phosphoserine. An interaction with TP53 region spans residues 885-1093; that stretch reads PVQDQHQPII…FQHGSPLHST (209 aa). A required for localization to nuclear speckles region spans residues 891–998; the sequence is QPIIIPDTPS…PLKTQLGDCT (108 aa). Residues 902–926 form an SUMO interaction motifs (SIM); required for nuclear localization and kinase activity region; it reads PVSVITIRSDTDEEEDNKYKPNSSS. Residues 938–981 are disordered; it reads TVNDSPDSDSSLSSPHPTDTLSALRGNSGTLLEGPGRPAADGIG. A compositionally biased stretch (low complexity) spans 941-959; sequence DSPDSDSSLSSPHPTDTLS. Lysine 991 participates in a covalent cross-link: Glycyl lysine isopeptide (Lys-Gly) (interchain with G-Cter in SUMO2). Disordered regions lie at residues 1046-1069 and 1084-1104; these read LSQN…APRR and FQHG…APAH. Low complexity-rich tracts occupy residues 1047-1063 and 1095-1104; these read SQNQ…ERSS and HPHLAPAPAH. Serine 1200 is subject to Phosphoserine. Residue lysine 1203 forms a Glycyl lysine isopeptide (Lys-Gly) (interchain with G-Cter in SUMO) linkage.

This sequence belongs to the protein kinase superfamily. CMGC Ser/Thr protein kinase family. HIPK subfamily. In terms of assembly, interacts with Nkx1-2, Nkx2-5, MYB, PARK7, DAXX and p53/TP53. Part of a cytoplasmic complex made of HIPK1, DAB2IP and MAP3K5 in response to TNF. This complex formation promotes MAP3K5-JNK activation and subsequent apoptosis. In terms of processing, phosphorylated and activated by JNK1. Autophosphorylated. Sumoylated. When conjugated it is directed to nuclear speckles. SENP1-mediated desumoylation is mediated by TNF in response to stress stimuli, triggering transient translocation from nucleus to cytoplasm. As to expression, ubiquitously expressed, with high levels in reproductive tissues. Expressed in the epithelial layer of mammary gland, uterus and epididymis, in the corpus luteum, and in post-meiotic round spermatids.

It is found in the nucleus. The protein localises to the cytoplasm. Its subcellular location is the nucleus speckle. It carries out the reaction L-seryl-[protein] + ATP = O-phospho-L-seryl-[protein] + ADP + H(+). The catalysed reaction is L-threonyl-[protein] + ATP = O-phospho-L-threonyl-[protein] + ADP + H(+). Serine/threonine-protein kinase involved in transcription regulation and TNF-mediated cellular apoptosis. Plays a role as a corepressor for homeodomain transcription factors. Phosphorylates DAXX and MYB. Phosphorylates DAXX in response to stress, and mediates its translocation from the nucleus to the cytoplasm. Inactivates MYB transcription factor activity by phosphorylation. Prevents MAP3K5-JNK activation in the absence of TNF. TNF triggers its translocation to the cytoplasm in response to stress stimuli, thus activating nuclear MAP3K5-JNK by derepression and promoting apoptosis. May be involved in anti-oxidative stress responses. Involved in the regulation of eye size, lens formation and retinal lamination during late embryogenesis. Promotes angiogenesis and to be involved in erythroid differentiation. May be involved in malignant squamous cell tumor formation. Phosphorylates PAGE4 at 'Thr-51' which is critical for the ability of PAGE4 to potentiate the transcriptional activator activity of JUN. In Mus musculus (Mouse), this protein is Homeodomain-interacting protein kinase 1 (Hipk1).